A 122-amino-acid chain; its full sequence is Small ribosomal subunit protein bS16 (122 aa).

The segment at Arg-85–Glu-122 is disordered. Basic and acidic residues predominate over residues Arg-99 to Lys-110. Low complexity predominate over residues Ala-111–Glu-122.

The protein belongs to the bacterial ribosomal protein bS16 family.

The chain is Small ribosomal subunit protein bS16 from Rhizobium etli (strain ATCC 51251 / DSM 11541 / JCM 21823 / NBRC 15573 / CFN 42).